Here is a 1620-residue protein sequence, read N- to C-terminus: ABC-type organic anion transporter ABCA8B (1620 aa).

A run of 7 helical transmembrane segments spans residues 30–50 (SLME…YPHG), 223–243 (FFIF…SINV), 267–287 (SWGL…ALVI), 298–318 (FMVV…LAFL), 326–346 (SVLT…LGFT), 352–372 (LPAP…TLGM), and 396–416 (LIIA…ALMM). In terms of domain architecture, ABC transporter 1 spans 479–714 (IRIRNISKEY…WGVGYHLSLQ (236 aa)). ATP is bound at residue 515-522 (GHSGAGKS). The N-linked (GlcNAc...) asparagine glycan is linked to Asn-723. 8 consecutive transmembrane segments (helical) span residues 860-880 (TLLS…FENI), 979-999 (CFPV…KPSA), 1023-1043 (TAFW…SSVT), 1069-1089 (MVDI…DYLF), 1105-1125 (IPCS…ISFI), 1135-1155 (IWSL…LLAF), 1164-1184 (IIFL…LHLF), and 1194-1214 (VIEP…FIFT). Residues 1283–1516 (LRKEYAGKQK…FGKDYLLEMK (234 aa)) form the ABC transporter 2 domain. 1321-1328 (GHNGAGKS) is a binding site for ATP.

The protein belongs to the ABC transporter superfamily. ABCA family. In terms of tissue distribution, expressed in heart, brain, lung, liver and skeletal muscle. Highly expressed in the liver, and is also abundant in heart and skeletal muscle. Highly expressed in liver.

It localises to the cell membrane. Its subcellular location is the basolateral cell membrane. It catalyses the reaction taurocholate(in) + ATP + H2O = taurocholate(out) + ADP + phosphate + H(+). The enzyme catalyses cholesterol(in) + ATP + H2O = cholesterol(out) + ADP + phosphate + H(+). Its activity is regulated as follows. Cholesterol efflux is increased by extracellularly applied taurocholate. Its function is as follows. Mediates cholesterol and taurocholate efflux. Through the interaction with ABCA1 potentiates the cholesterol efflux to lipid-free APOA1, in turn regulates high-density lipoprotein cholesterol levels. In Mus musculus (Mouse), this protein is ABC-type organic anion transporter ABCA8B.